Reading from the N-terminus, the 195-residue chain is Protein GrpE (195 aa).

Residues 1–18 show a composition bias toward basic and acidic residues; the sequence is MDPKEKKTKQEEELKVDD. The segment at 1-41 is disordered; it reads MDPKEKKTKQEEELKVDDIQDTVEGQSQNEEATEATEPLTA.

It belongs to the GrpE family. Homodimer.

The protein localises to the cytoplasm. Its function is as follows. Participates actively in the response to hyperosmotic and heat shock by preventing the aggregation of stress-denatured proteins, in association with DnaK and GrpE. It is the nucleotide exchange factor for DnaK and may function as a thermosensor. Unfolded proteins bind initially to DnaJ; upon interaction with the DnaJ-bound protein, DnaK hydrolyzes its bound ATP, resulting in the formation of a stable complex. GrpE releases ADP from DnaK; ATP binding to DnaK triggers the release of the substrate protein, thus completing the reaction cycle. Several rounds of ATP-dependent interactions between DnaJ, DnaK and GrpE are required for fully efficient folding. This Bacteroides fragilis (strain ATCC 25285 / DSM 2151 / CCUG 4856 / JCM 11019 / LMG 10263 / NCTC 9343 / Onslow / VPI 2553 / EN-2) protein is Protein GrpE.